The sequence spans 100 residues: Large ribosomal subunit protein uL23 (100 aa).

This sequence belongs to the universal ribosomal protein uL23 family. In terms of assembly, part of the 50S ribosomal subunit. Contacts protein L29, and trigger factor when it is bound to the ribosome.

Functionally, one of the early assembly proteins it binds 23S rRNA. One of the proteins that surrounds the polypeptide exit tunnel on the outside of the ribosome. Forms the main docking site for trigger factor binding to the ribosome. This Vibrio vulnificus (strain CMCP6) protein is Large ribosomal subunit protein uL23.